The chain runs to 300 residues: Protein TRACHEARY ELEMENT DIFFERENTIATION-RELATED 7A (300 aa).

The tract at residues 1–181 (MASPLSQSVF…HIIPPPPPSP (181 aa)) is disordered. Topologically, residues 1-187 (MASPLSQSVF…PPSPSNHSTT (187 aa)) are extracellular. The span at 12–181 (HFPPPSPAAT…HIIPPPPPSP (170 aa)) shows a compositional bias: pro residues. N183 is a glycosylation site (N-linked (GlcNAc...) asparagine). Residues 188-208 (IVVIFVSCGGVFFLAFAMAAL) form a helical membrane-spanning segment. Over 209–300 (WCFLKKKKKK…SSFGHHYLHG (92 aa)) the chain is Cytoplasmic.

As to expression, accumulates in cells differentiating into tracheary element (TE) which undergo secondary cell wall (SCW) formation.

It is found in the cell membrane. The protein resides in the secreted. It localises to the cell wall. Its function is as follows. Involved in the secondary cell wall (SCW) formation of vessel elements (e.g. protoxylem and metaxylem), thus promoting tracheary element (TE) differentiation. The chain is Protein TRACHEARY ELEMENT DIFFERENTIATION-RELATED 7A from Zinnia elegans (Garden zinnia).